Here is a 373-residue protein sequence, read N- to C-terminus: 4-hydroxy-3-methylbut-2-en-1-yl diphosphate synthase (flavodoxin) (373 aa).

4 residues coordinate [4Fe-4S] cluster: C270, C273, C305, and E312.

Belongs to the IspG family. [4Fe-4S] cluster serves as cofactor.

It catalyses the reaction (2E)-4-hydroxy-3-methylbut-2-enyl diphosphate + oxidized [flavodoxin] + H2O + 2 H(+) = 2-C-methyl-D-erythritol 2,4-cyclic diphosphate + reduced [flavodoxin]. It functions in the pathway isoprenoid biosynthesis; isopentenyl diphosphate biosynthesis via DXP pathway; isopentenyl diphosphate from 1-deoxy-D-xylulose 5-phosphate: step 5/6. Converts 2C-methyl-D-erythritol 2,4-cyclodiphosphate (ME-2,4cPP) into 1-hydroxy-2-methyl-2-(E)-butenyl 4-diphosphate. This chain is 4-hydroxy-3-methylbut-2-en-1-yl diphosphate synthase (flavodoxin), found in Klebsiella pneumoniae subsp. pneumoniae (strain ATCC 700721 / MGH 78578).